A 259-amino-acid chain; its full sequence is Protein odd-skipped-related 1 (259 aa).

C2H2-type zinc fingers lie at residues 168 to 190, 196 to 218, and 224 to 246; these read FVCK…ERTH, YTCD…RYIH, and FKCQ…KTLH.

It belongs to the Odd C2H2-type zinc-finger protein family.

It localises to the nucleus. Functionally, transcriptional repressor. Required for pronephric kidney development. The chain is Protein odd-skipped-related 1 from Xenopus tropicalis (Western clawed frog).